An 868-amino-acid chain; its full sequence is Homeobox-leucine zipper protein HOX29 (868 aa).

A DNA-binding region (homeobox) is located at residues 9 to 72; it reads DASKYVRYTP…NRRCREKQRK (64 aa). The stretch at 64 to 106 forms a coiled coil; that stretch reads RRCREKQRKESSRLQALNRKLTAMNKLLMEENDRLQKQVSQLV. Residues 150-171 are disordered; sequence VTSGHHHQQQQHNVVQPPPRDA. The START domain maps to 169–397; it reads RDASPAGLMS…VAHEDTRSVI (229 aa).

Belongs to the HD-ZIP homeobox family. Class III subfamily. Expressed in phloem.

Its subcellular location is the nucleus. Functionally, probable transcription factor that may be necessary for the proper patterning of vascular bundles. This Oryza sativa subsp. japonica (Rice) protein is Homeobox-leucine zipper protein HOX29 (HOX29).